The chain runs to 350 residues: Biotin synthase (350 aa).

One can recognise a Radical SAM core domain in the interval 41-268; that stretch reads NEVQISRLLS…KSRVRLSAGR (228 aa). [4Fe-4S] cluster contacts are provided by C56, C60, and C63. Positions 100, 131, 191, and 263 each coordinate [2Fe-2S] cluster.

It belongs to the radical SAM superfamily. Biotin synthase family. Homodimer. [4Fe-4S] cluster is required as a cofactor. It depends on [2Fe-2S] cluster as a cofactor.

It catalyses the reaction (4R,5S)-dethiobiotin + (sulfur carrier)-SH + 2 reduced [2Fe-2S]-[ferredoxin] + 2 S-adenosyl-L-methionine = (sulfur carrier)-H + biotin + 2 5'-deoxyadenosine + 2 L-methionine + 2 oxidized [2Fe-2S]-[ferredoxin]. It functions in the pathway cofactor biosynthesis; biotin biosynthesis; biotin from 7,8-diaminononanoate: step 2/2. In terms of biological role, catalyzes the conversion of dethiobiotin (DTB) to biotin by the insertion of a sulfur atom into dethiobiotin via a radical-based mechanism. This Shewanella piezotolerans (strain WP3 / JCM 13877) protein is Biotin synthase.